The following is a 320-amino-acid chain: Dual oxidase maturation factor 2 (320 aa).

Residues M1–S21 lie on the Extracellular side of the membrane. A helical transmembrane segment spans residues V22–L42. Residues P43–R56 are Cytoplasmic-facing. Residues V57 to F77 form a helical membrane-spanning segment. At V78–T183 the chain is on the extracellular side. N-linked (GlcNAc...) asparagine glycans are attached at residues N84, N109, and N121. Residues L184–L204 form a helical membrane-spanning segment. Residues Y205 to G206 are Cytoplasmic-facing. Residues G207–I227 traverse the membrane as a helical segment. The Extracellular portion of the chain corresponds to S228–G247. A helical membrane pass occupies residues A248 to V268. Topologically, residues S269–L320 are cytoplasmic.

The protein belongs to the DUOXA family. Heterodimer with DUXA2; disulfide-linked. Interacts with CSNK1G2. Post-translationally, N-glycosylated. In terms of tissue distribution, specifically expressed in thyroid. Also detected in salivary glands.

The protein resides in the endoplasmic reticulum membrane. Its function is as follows. Required for the maturation and the transport from the endoplasmic reticulum to the plasma membrane of functional DUOX2. May play a role in thyroid hormone synthesis. This Homo sapiens (Human) protein is Dual oxidase maturation factor 2 (DUOXA2).